We begin with the raw amino-acid sequence, 138 residues long: DNA-directed RNA polymerase II subunit 4 (138 aa).

At S2 the chain carries N-acetylserine.

It belongs to the eukaryotic RPB4 RNA polymerase subunit family. Component of the RNA polymerase II complex consisting of at least 12 subunits. Interacts with NRPB7.

It is found in the nucleus. DNA-dependent RNA polymerase catalyzes the transcription of DNA into RNA using the four ribonucleoside triphosphates as substrates. Second largest component of RNA polymerase II which synthesizes mRNA precursors and many functional non-coding RNAs. Proposed to contribute to the polymerase catalytic activity and forms the polymerase active center together with the largest subunit. Pol II is the central component of the basal RNA polymerase II transcription machinery. It is composed of mobile elements that move relative to each other. The polypeptide is DNA-directed RNA polymerase II subunit 4 (NRPB4) (Arabidopsis thaliana (Mouse-ear cress)).